The following is a 311-amino-acid chain: Prohibitin-2 (311 aa).

A helical membrane pass occupies residues 39-57; the sequence is GAGMGLAGLVLLGGAAFVA. The AIM motif lies at 141–144; that stretch reads YRTL.

It belongs to the prohibitin family. The mitochondrial prohibitin complex consists of two subunits (PHB1 and PHB2). The subunits assemble into a membrane-associated ring-shaped supercomplex of approximately 1 mDa. Interacts with ATG24/SNX4; the interaction is direct and plays a role in mitophagy.

The protein resides in the mitochondrion inner membrane. Functionally, prohibitin probably acts as a holdase/unfoldase for the stabilization of newly synthesized mitochondrial proteins. Involved in mitophagy. Required for the switch to necrotrophic growth. The sequence is that of Prohibitin-2 from Colletotrichum higginsianum (strain IMI 349063) (Crucifer anthracnose fungus).